The sequence spans 213 residues: Phosphoribosylformylglycinamidine synthase subunit PurQ (213 aa).

Residues 5-213 form the Glutamine amidotransferase type-1 domain; it reads ACVVVYPGSN…FQSILNYLKR (209 aa). The active-site Nucleophile is C86. Residues H186 and E188 contribute to the active site.

Part of the FGAM synthase complex composed of 1 PurL, 1 PurQ and 2 PurS subunits.

Its subcellular location is the cytoplasm. The enzyme catalyses N(2)-formyl-N(1)-(5-phospho-beta-D-ribosyl)glycinamide + L-glutamine + ATP + H2O = 2-formamido-N(1)-(5-O-phospho-beta-D-ribosyl)acetamidine + L-glutamate + ADP + phosphate + H(+). The catalysed reaction is L-glutamine + H2O = L-glutamate + NH4(+). It functions in the pathway purine metabolism; IMP biosynthesis via de novo pathway; 5-amino-1-(5-phospho-D-ribosyl)imidazole from N(2)-formyl-N(1)-(5-phospho-D-ribosyl)glycinamide: step 1/2. Part of the phosphoribosylformylglycinamidine synthase complex involved in the purines biosynthetic pathway. Catalyzes the ATP-dependent conversion of formylglycinamide ribonucleotide (FGAR) and glutamine to yield formylglycinamidine ribonucleotide (FGAM) and glutamate. The FGAM synthase complex is composed of three subunits. PurQ produces an ammonia molecule by converting glutamine to glutamate. PurL transfers the ammonia molecule to FGAR to form FGAM in an ATP-dependent manner. PurS interacts with PurQ and PurL and is thought to assist in the transfer of the ammonia molecule from PurQ to PurL. This chain is Phosphoribosylformylglycinamidine synthase subunit PurQ, found in Thermotoga maritima (strain ATCC 43589 / DSM 3109 / JCM 10099 / NBRC 100826 / MSB8).